The following is a 54-amino-acid chain: Protein PIGBOS1 (54 aa).

Topologically, residues 1–4 (MFRR) are mitochondrial intermembrane. The chain crosses the membrane as a helical span at residues 5–25 (LTFAQLLFATVLGIAGGVYIF). At 26–54 (QPVFEQYAKDQKELKEKMQLVQESEEKKS) the chain is on the cytoplasmic side. A required for interaction with CLCC1 region spans residues 30–36 (EQYAKDQ).

As to quaternary structure, homooligomer. Interacts (via C-terminus) with endoplasmic reticulum (ER) protein CLCC1; the interaction occurs at the mitochondria-associated ER membrane, a zone of contact between the ER and mitochondrial membranes, but does not appear to play a role in ER-mitochondria tethering and is not affected by ER stress.

It localises to the mitochondrion outer membrane. Functionally, plays a role in regulation of the unfolded protein response triggered by endoplasmic reticulum (ER) stress resulting from the presence of unfolded proteins in the ER lumen. The sequence is that of Protein PIGBOS1 from Homo sapiens (Human).